The following is a 470-amino-acid chain: Sorting nexin-17 (470 aa).

In terms of domain architecture, PX spans 1–109; sequence MHFSIPETES…SFLRRAQQET (109 aa). A 1,2-diacyl-sn-glycero-3-phospho-(1D-myo-inositol-3-phosphate) contacts are provided by arginine 36, serine 38, lysine 62, and arginine 75. The region spanning 115–206 is the Ras-associating domain; that stretch reads EEVSLEVLLS…YKIVLRKSYW (92 aa). The interval 115 to 432 is FERM-like; it reads EEVSLEVLLS…DATRESMVKL (318 aa). Residues 270 to 432 form a PTB-like F3 module region; that stretch reads GYLRFDACVA…DATRESMVKL (163 aa). Phosphoserine occurs at positions 336, 407, 409, 415, 421, 437, and 440. Positions 401–426 are disordered; sequence GGTLRRSDSQQAVKSPPLLESPDATR. An interacts with the retriever complex region spans residues 458–470; it reads GNFAFEGIGDEDL.

This sequence belongs to the sorting nexin family. As to quaternary structure, monomer. Interacts with APP (via cytoplasmic YXNPXY motif). Interacts with KIF1B. Interacts with the C-termini of P-selectin, PTC, LDLR, VLDLR, LRP1 and LRP8. Interacts with KRIT1 (via N-terminus). Interacts with HRAS. Interacts with ITGB1 and ITGB5 (via NPxY motif). Interacts with CCDC22 and CCDC93; the interaction associates SNX17 with the CCC complex. Interacts (via C-terminus) with VPS26C and VPS35L; the interactions are direct and associate SNX17 with the retriever complex.

The protein localises to the cytoplasm. Its subcellular location is the early endosome. It is found in the cytoplasmic vesicle membrane. Its function is as follows. Critical regulator of endosomal recycling of numerous surface proteins, including integrins, signaling receptor and channels. Binds to NPxY sequences in the cytoplasmic tails of target cargos. Associates with retriever and CCC complexes to prevent lysosomal degradation and promote cell surface recycling of numerous cargos such as integrins ITGB1, ITGB5 and their associated alpha subunits. Also required for maintenance of normal cell surface levels of APP and LRP1. Interacts with membranes containing phosphatidylinositol 3-phosphate (PtdIns(3P)). The sequence is that of Sorting nexin-17 (SNX17) from Homo sapiens (Human).